We begin with the raw amino-acid sequence, 159 residues long: 6,7-dimethyl-8-ribityllumazine synthase (159 aa).

Residues tryptophan 26, 58-60 (SFE), and 80-82 (VVI) contribute to the 5-amino-6-(D-ribitylamino)uracil site. 85-86 (GT) serves as a coordination point for (2S)-2-hydroxy-3-oxobutyl phosphate. Histidine 88 acts as the Proton donor in catalysis. Position 113 (phenylalanine 113) interacts with 5-amino-6-(D-ribitylamino)uracil. Arginine 127 lines the (2S)-2-hydroxy-3-oxobutyl phosphate pocket.

Belongs to the DMRL synthase family.

The enzyme catalyses (2S)-2-hydroxy-3-oxobutyl phosphate + 5-amino-6-(D-ribitylamino)uracil = 6,7-dimethyl-8-(1-D-ribityl)lumazine + phosphate + 2 H2O + H(+). It participates in cofactor biosynthesis; riboflavin biosynthesis; riboflavin from 2-hydroxy-3-oxobutyl phosphate and 5-amino-6-(D-ribitylamino)uracil: step 1/2. Its function is as follows. Catalyzes the formation of 6,7-dimethyl-8-ribityllumazine by condensation of 5-amino-6-(D-ribitylamino)uracil with 3,4-dihydroxy-2-butanone 4-phosphate. This is the penultimate step in the biosynthesis of riboflavin. The chain is 6,7-dimethyl-8-ribityllumazine synthase from Renibacterium salmoninarum (strain ATCC 33209 / DSM 20767 / JCM 11484 / NBRC 15589 / NCIMB 2235).